A 165-amino-acid chain; its full sequence is Large ribosomal subunit protein uL10 (165 aa).

It belongs to the universal ribosomal protein uL10 family. In terms of assembly, part of the ribosomal stalk of the 50S ribosomal subunit. The N-terminus interacts with L11 and the large rRNA to form the base of the stalk. The C-terminus forms an elongated spine to which L12 dimers bind in a sequential fashion forming a multimeric L10(L12)X complex.

Forms part of the ribosomal stalk, playing a central role in the interaction of the ribosome with GTP-bound translation factors. This Burkholderia multivorans (strain ATCC 17616 / 249) protein is Large ribosomal subunit protein uL10.